The primary structure comprises 1104 residues: Mitogen-activated protein kinase kinase kinase 9 (1104 aa).

Positions 12-22 are enriched in low complexity; sequence ASAAAAAPPGE. Residues 12–47 are disordered; sequence ASAAAAAPPGEDGAGAGAEEEEEEEEEAAAAVGPGE. Residues 29–39 are compositionally biased toward acidic residues; that stretch reads AEEEEEEEEEA. The 65-residue stretch at 52 to 116 folds into the SH3 domain; it reads APLPYWTAVF…PSNYVTPRSA (65 aa). In terms of domain architecture, Protein kinase spans 144 to 412; the sequence is LTLEEIIGIG…LTTIEESGFF (269 aa). Residues 150 to 158 and lysine 171 each bind ATP; that span reads IGIGGFGKV. Aspartate 268 (proton acceptor) is an active-site residue. 2 positions are modified to phosphothreonine; by autocatalysis: threonine 304 and threonine 305. At serine 308 the chain carries Phosphoserine; by autocatalysis. At threonine 312 the chain carries Phosphothreonine; by autocatalysis. 2 leucine-zipper regions span residues 430 to 451 and 465 to 486; these read IQEM…EEEL and LRRR…ELNI. 4 disordered regions span residues 532–636, 675–742, 781–819, and 890–1038; these read ASPT…PHFH, MEDE…LKRG, EEPE…FKKE, and RDPN…CFAS. At serine 533 the chain carries Phosphoserine. Polar residues-rich tracts occupy residues 566–575 and 723–739; these read PGESSKTWGR and PVNS…TNSL. Residues 785 to 797 show a composition bias toward basic and acidic residues; sequence PPAREEKKRREGL. The segment covering 893–910 has biased composition (polar residues); it reads NQSLTPTHVTLTTPSQPS. A compositionally biased stretch (low complexity) spans 929 to 944; it reads SRSPSSNGLSPSPGAG. A compositionally biased stretch (polar residues) spans 1014-1038; it reads HARSTSPANSSSTETPSNLDSCFAS.

It belongs to the protein kinase superfamily. STE Ser/Thr protein kinase family. MAP kinase kinase kinase subfamily. In terms of assembly, homodimer. Mg(2+) serves as cofactor. Autophosphorylation on serine and threonine residues within the activation loop plays a role in enzyme activation. Thr-312 is likely to be the main autophosphorylation site. Autophosphorylation also occurs on Thr-304 and Ser-308. In terms of tissue distribution, expressed in epithelial tumor cell lines of colonic, breast and esophageal origin.

The catalysed reaction is L-seryl-[protein] + ATP = O-phospho-L-seryl-[protein] + ADP + H(+). It catalyses the reaction L-threonyl-[protein] + ATP = O-phospho-L-threonyl-[protein] + ADP + H(+). Homodimerization via the leucine zipper domains is required for autophosphorylation of multiple sites in the activation loop and subsequent activation. Autophosphorylation at Thr-312 is the key step in activation of MAP3K9/MLK1 and is required for full phosphorylation. Autophosphorylation at Thr-304 and Ser-308 have been shown to be of secondary importance in the activation of MAP3K9/MLK1. CEP-1347 and many indolocarbazole analogs have been shown to act as inhibitors of MAP3K9/MLK1 activity. Functionally, serine/threonine kinase which acts as an essential component of the MAP kinase signal transduction pathway. Plays an important role in the cascades of cellular responses evoked by changes in the environment. Once activated, acts as an upstream activator of the MKK/JNK signal transduction cascade through the phosphorylation of MAP2K4/MKK4 and MAP2K7/MKK7 which in turn activate the JNKs. The MKK/JNK signaling pathway regulates stress response via activator protein-1 (JUN) and GATA4 transcription factors. Also plays a role in mitochondrial death signaling pathway, including the release cytochrome c, leading to apoptosis. The polypeptide is Mitogen-activated protein kinase kinase kinase 9 (MAP3K9) (Homo sapiens (Human)).